The primary structure comprises 543 residues: MLTLLHLLSAVALLVWGTHIVRTGVMRVFGARLRTVLSRSVEKKPLAFCAGIGVTALVQSSNATTMLVTSFVAQDLVALAPALVIVLGADVGTALMARILTFDLSWLSPLLIFIGVIFFLGRKQSRAGQLGRVGIGLGLILLALELIVQAVTPITQANGVQVIFASLTGDILLDALIGAMFAIISYSSLAAVLLTATLTAAGIISFPVALCLVIGANLGSGLLAMLNNSAANAAARRVALGSLLFKLVGSLIILPFVHLLAETMGKLSLPKAELVIYFHVFYNLVRCLVMLPFVDPMARFCKTIIRDEPELDTQLRPKHLDVSALDTPTLALANAARETLRIGDAMEQMMEGLNKVMHGEPRQEKELRKLADDINVLYTAIKLYLARMPKEELAEEESRRWAEIIEMSLNLEQASDIVERMGSEIADKSLAARRAFSLDGLKELDALYEQLLSNLKLAMSVFFSGDVTSARRLRRSKHRFRILNRRYSHAHVDRLHQQNVQSIETSSLHLGLLGDMQRLNSLFCSVAYSVLEQPDEDEGRDEY.

The next 9 helical transmembrane spans lie at 1–21 (MLTL…THIV), 48–68 (FCAG…TMLV), 76–96 (LVAL…TALM), 99–119 (ILTF…VIFF), 134–154 (GIGL…VTPI), 175–195 (ALIG…VLLT), 196–216 (ATLT…VIGA), 240–260 (LGSL…VHLL), and 274–294 (LVIY…LPFV).

This sequence belongs to the YjbB family.

It localises to the cell inner membrane. The enzyme catalyses phosphate(in) = phosphate(out). Functionally, might be involved in phosphate export. Overproduction of YjbB reduces the elevated levels of polyphosphate (polyP) in a phoU mutant that accumulates 1000-fold higher levels of polyP than the wild type, suggesting that YjbB exports excess intracellular phosphate (Pi) in the phoU mutant and thus reduces the levels of polyP. This is Putative inorganic phosphate export protein YjbB (yjbB) from Escherichia coli (strain K12).